A 161-amino-acid chain; its full sequence is UPF0178 protein Rsph17025_3122 (161 aa).

The protein belongs to the UPF0178 family.

The polypeptide is UPF0178 protein Rsph17025_3122 (Cereibacter sphaeroides (strain ATCC 17025 / ATH 2.4.3) (Rhodobacter sphaeroides)).